We begin with the raw amino-acid sequence, 390 residues long: Digeranylgeranylglycerophospholipid reductase (390 aa).

Residues A18, E37, C48, A49, A51, R98, V122, D278, G290, and I291 each contribute to the FAD site. V368 lines the a 2,3-bis-O-(geranylgeranyl)-sn-glycerol 1-phospholipid pocket.

It belongs to the geranylgeranyl reductase family. DGGGPL reductase subfamily. The cofactor is FAD.

The enzyme catalyses a 2,3-bis-O-phytanyl-sn-glycerol 1-phospholipid + 8 A = a 2,3-bis-O-(geranylgeranyl)-sn-glycerol 1-phospholipid + 8 AH2. It catalyses the reaction 2,3-bis-O-(phytanyl)-sn-glycerol 1-phosphate + 8 A = 2,3-bis-O-(geranylgeranyl)-sn-glycerol 1-phosphate + 8 AH2. The catalysed reaction is CDP-2,3-bis-O-(geranylgeranyl)-sn-glycerol + 8 AH2 = CDP-2,3-bis-O-(phytanyl)-sn-glycerol + 8 A. It carries out the reaction archaetidylserine + 8 AH2 = 2,3-bis-O-phytanyl-sn-glycero-3-phospho-L-serine + 8 A. The protein operates within membrane lipid metabolism; glycerophospholipid metabolism. In terms of biological role, is involved in the reduction of 2,3-digeranylgeranylglycerophospholipids (unsaturated archaeols) into 2,3-diphytanylglycerophospholipids (saturated archaeols) in the biosynthesis of archaeal membrane lipids. Catalyzes the formation of archaetidic acid (2,3-di-O-phytanyl-sn-glyceryl phosphate) from 2,3-di-O-geranylgeranylglyceryl phosphate (DGGGP) via the hydrogenation of each double bond of the isoprenoid chains. Is also probably able to reduce double bonds of geranyl groups in CDP-2,3-bis-O-(geranylgeranyl)-sn-glycerol and archaetidylserine, thus acting at various stages in the biosynthesis of archaeal membrane lipids. This chain is Digeranylgeranylglycerophospholipid reductase, found in Methanococcus vannielii (strain ATCC 35089 / DSM 1224 / JCM 13029 / OCM 148 / SB).